Here is a 222-residue protein sequence, read N- to C-terminus: Protein GrpE (222 aa).

The segment at 1 to 64 is disordered; that stretch reads MSDQNLGQGS…GEEILSDDDL (64 aa). Residues 16 to 44 show a composition bias toward basic and acidic residues; that stretch reads EEPIVRDKRRIDPETGKVREPQDLSHEEL. A compositionally biased stretch (acidic residues) spans 54 to 64; the sequence is QGEEILSDDDL.

Belongs to the GrpE family. As to quaternary structure, homodimer.

It localises to the cytoplasm. Functionally, participates actively in the response to hyperosmotic and heat shock by preventing the aggregation of stress-denatured proteins, in association with DnaK and GrpE. It is the nucleotide exchange factor for DnaK and may function as a thermosensor. Unfolded proteins bind initially to DnaJ; upon interaction with the DnaJ-bound protein, DnaK hydrolyzes its bound ATP, resulting in the formation of a stable complex. GrpE releases ADP from DnaK; ATP binding to DnaK triggers the release of the substrate protein, thus completing the reaction cycle. Several rounds of ATP-dependent interactions between DnaJ, DnaK and GrpE are required for fully efficient folding. In Leifsonia xyli subsp. xyli (strain CTCB07), this protein is Protein GrpE.